The sequence spans 254 residues: Phosphoribosylaminoimidazole-succinocarboxamide synthase (254 aa).

Belongs to the SAICAR synthetase family.

The catalysed reaction is 5-amino-1-(5-phospho-D-ribosyl)imidazole-4-carboxylate + L-aspartate + ATP = (2S)-2-[5-amino-1-(5-phospho-beta-D-ribosyl)imidazole-4-carboxamido]succinate + ADP + phosphate + 2 H(+). It participates in purine metabolism; IMP biosynthesis via de novo pathway; 5-amino-1-(5-phospho-D-ribosyl)imidazole-4-carboxamide from 5-amino-1-(5-phospho-D-ribosyl)imidazole-4-carboxylate: step 1/2. The polypeptide is Phosphoribosylaminoimidazole-succinocarboxamide synthase (Rhizobium meliloti (strain 1021) (Ensifer meliloti)).